Reading from the N-terminus, the 248-residue chain is Leucyl/phenylalanyl-tRNA--protein transferase (248 aa).

This sequence belongs to the L/F-transferase family.

It is found in the cytoplasm. The catalysed reaction is N-terminal L-lysyl-[protein] + L-leucyl-tRNA(Leu) = N-terminal L-leucyl-L-lysyl-[protein] + tRNA(Leu) + H(+). The enzyme catalyses N-terminal L-arginyl-[protein] + L-leucyl-tRNA(Leu) = N-terminal L-leucyl-L-arginyl-[protein] + tRNA(Leu) + H(+). It catalyses the reaction L-phenylalanyl-tRNA(Phe) + an N-terminal L-alpha-aminoacyl-[protein] = an N-terminal L-phenylalanyl-L-alpha-aminoacyl-[protein] + tRNA(Phe). Functions in the N-end rule pathway of protein degradation where it conjugates Leu, Phe and, less efficiently, Met from aminoacyl-tRNAs to the N-termini of proteins containing an N-terminal arginine or lysine. The chain is Leucyl/phenylalanyl-tRNA--protein transferase from Rhizorhabdus wittichii (strain DSM 6014 / CCUG 31198 / JCM 15750 / NBRC 105917 / EY 4224 / RW1) (Sphingomonas wittichii).